The following is a 306-amino-acid chain: Probable GTP 3',8-cyclase (306 aa).

In terms of domain architecture, Radical SAM core spans 5–232 (RFGRPVTNLR…RRRKYFLPVD (228 aa)). Arginine 14 contributes to the GTP binding site. [4Fe-4S] cluster contacts are provided by cysteine 21 and cysteine 25. Tyrosine 27 serves as a coordination point for S-adenosyl-L-methionine. Cysteine 28 is a [4Fe-4S] cluster binding site. Lysine 61 serves as a coordination point for GTP. Glycine 65 contacts S-adenosyl-L-methionine. Threonine 90 is a GTP binding site. Residue serine 114 coordinates S-adenosyl-L-methionine. GTP is bound at residue lysine 150. An S-adenosyl-L-methionine-binding site is contributed by methionine 189. 2 residues coordinate [4Fe-4S] cluster: cysteine 250 and cysteine 253. 255–257 (RLR) contributes to the GTP binding site. Cysteine 267 is a binding site for [4Fe-4S] cluster.

The protein belongs to the radical SAM superfamily. MoaA family. The cofactor is [4Fe-4S] cluster.

It carries out the reaction GTP + AH2 + S-adenosyl-L-methionine = (8S)-3',8-cyclo-7,8-dihydroguanosine 5'-triphosphate + 5'-deoxyadenosine + L-methionine + A + H(+). It participates in cofactor biosynthesis; molybdopterin biosynthesis. Its function is as follows. Catalyzes the cyclization of GTP to (8S)-3',8-cyclo-7,8-dihydroguanosine 5'-triphosphate. The sequence is that of Probable GTP 3',8-cyclase from Pyrococcus abyssi (strain GE5 / Orsay).